The chain runs to 348 residues: Dihydroorotase (348 aa).

Zn(2+) contacts are provided by histidine 14 and histidine 16. Substrate-binding positions include 16 to 18 (HLR) and asparagine 42. Lysine 100, histidine 137, and histidine 175 together coordinate Zn(2+). Position 100 is an N6-carboxylysine (lysine 100). Substrate is bound at residue histidine 137. Leucine 220 contacts substrate. Aspartate 248 is a Zn(2+) binding site. The active site involves aspartate 248. Histidine 252 and alanine 264 together coordinate substrate.

The protein belongs to the metallo-dependent hydrolases superfamily. DHOase family. Class II DHOase subfamily. In terms of assembly, homodimer. Zn(2+) is required as a cofactor.

It carries out the reaction (S)-dihydroorotate + H2O = N-carbamoyl-L-aspartate + H(+). The protein operates within pyrimidine metabolism; UMP biosynthesis via de novo pathway; (S)-dihydroorotate from bicarbonate: step 3/3. In terms of biological role, catalyzes the reversible cyclization of carbamoyl aspartate to dihydroorotate. The protein is Dihydroorotase of Pseudomonas paraeruginosa (strain DSM 24068 / PA7) (Pseudomonas aeruginosa (strain PA7)).